A 469-amino-acid polypeptide reads, in one-letter code: Probable ribonuclease FAU-1 (469 aa).

This sequence belongs to the FAU-1 family.

In terms of biological role, probable RNase involved in rRNA stability through maturation and/or degradation of precursor rRNAs. Binds to RNA in loop regions with AU-rich sequences. In Ignicoccus hospitalis (strain KIN4/I / DSM 18386 / JCM 14125), this protein is Probable ribonuclease FAU-1.